We begin with the raw amino-acid sequence, 450 residues long: Ribulose bisphosphate carboxylase large chain (450 aa).

N6,N6,N6-trimethyllysine is present on Lys4. Residues Asn113 and Thr163 each coordinate substrate. Lys165 functions as the Proton acceptor in the catalytic mechanism. A substrate-binding site is contributed by Lys167. The Mg(2+) site is built by Lys191, Asp193, and Glu194. Lys191 carries the N6-carboxylysine modification. His284 serves as the catalytic Proton acceptor. The substrate site is built by Arg285, His317, and Ser369.

This sequence belongs to the RuBisCO large chain family. Type I subfamily. As to quaternary structure, heterohexadecamer of 8 large chains and 8 small chains; disulfide-linked. The disulfide link is formed within the large subunit homodimers. Requires Mg(2+) as cofactor. Post-translationally, the disulfide bond which can form in the large chain dimeric partners within the hexadecamer appears to be associated with oxidative stress and protein turnover.

Its subcellular location is the plastid. It localises to the chloroplast. It carries out the reaction 2 (2R)-3-phosphoglycerate + 2 H(+) = D-ribulose 1,5-bisphosphate + CO2 + H2O. The enzyme catalyses D-ribulose 1,5-bisphosphate + O2 = 2-phosphoglycolate + (2R)-3-phosphoglycerate + 2 H(+). Functionally, ruBisCO catalyzes two reactions: the carboxylation of D-ribulose 1,5-bisphosphate, the primary event in carbon dioxide fixation, as well as the oxidative fragmentation of the pentose substrate in the photorespiration process. Both reactions occur simultaneously and in competition at the same active site. This is Ribulose bisphosphate carboxylase large chain from Crassula rupestris subsp. marnieriana (Pygmyweed).